A 347-amino-acid polypeptide reads, in one-letter code: Protein phosphatase 2C homolog 1 (347 aa).

The tract at residues 1–41 (MKGSHPNAGSLLEPLHKLNPFSENSTSGHRKNASDHSADGE) is disordered. The span at 32 to 41 (NASDHSADGE) shows a compositional bias: basic and acidic residues. In terms of domain architecture, PPM-type phosphatase spans 71-323 (LAGLMEDKNQ…DNITCIVVNL (253 aa)). Mn(2+) contacts are provided by aspartate 109, glycine 110, aspartate 275, and aspartate 314.

It belongs to the PP2C family. Monomer. The cofactor is Mg(2+). Requires Mn(2+) as cofactor.

It catalyses the reaction O-phospho-L-seryl-[protein] + H2O = L-seryl-[protein] + phosphate. It carries out the reaction O-phospho-L-threonyl-[protein] + H2O = L-threonyl-[protein] + phosphate. In terms of biological role, serine and threonine phosphatase. Has a specialized role in the heat shock response. May be responsible for the dephosphorylation of hsp90. The protein is Protein phosphatase 2C homolog 1 (ptc1) of Schizosaccharomyces pombe (strain 972 / ATCC 24843) (Fission yeast).